Reading from the N-terminus, the 157-residue chain is Parasitophorous vacuole membrane protein S16 (157 aa).

Positions 1-25 (MNIRKFIPSLALMLIFFAFANLVLS) are cleaved as a signal peptide. Residues 26–105 (DANDKAKKPA…DKKTTVNRNL (80 aa)) lie on the Extracellular side of the membrane. Positions 30–74 (KAKKPAGKGSPSTLQTPGSSSGASLHAVGPNQGGLSQGLSGKDSA) are disordered. The segment covering 39-52 (SPSTLQTPGSSSGA) has biased composition (polar residues). A helical transmembrane segment spans residues 106 to 126 (IISTAVTNMIMLIILSGIVGF). The Cytoplasmic segment spans residues 127 to 157 (KVKKTKNADDDKGDKDKDKDNTDEGDEGDDS). The tract at residues 130–157 (KTKNADDDKGDKDKDKDNTDEGDEGDDS) is disordered. A compositionally biased stretch (basic and acidic residues) spans 132–148 (KNADDDKGDKDKDKDNT).

It is found in the parasitophorous vacuole membrane. It localises to the vacuole. In terms of biological role, involved in male gametogenesis. Required for exflagellation of male gametocytes. May play a role in parasite transmission in the mosquito. Binds to the mosquito vector midgut. The polypeptide is Parasitophorous vacuole membrane protein S16 (Plasmodium falciparum (isolate 3D7)).